The sequence spans 283 residues: 4-hydroxy-3-methylbut-2-enyl diphosphate reductase (283 aa).

C12 lines the [4Fe-4S] cluster pocket. (2E)-4-hydroxy-3-methylbut-2-enyl diphosphate-binding residues include H40 and H72. 2 residues coordinate dimethylallyl diphosphate: H40 and H72. The isopentenyl diphosphate site is built by H40 and H72. [4Fe-4S] cluster is bound at residue C94. H122 serves as a coordination point for (2E)-4-hydroxy-3-methylbut-2-enyl diphosphate. H122 lines the dimethylallyl diphosphate pocket. H122 contacts isopentenyl diphosphate. E124 functions as the Proton donor in the catalytic mechanism. T160 contributes to the (2E)-4-hydroxy-3-methylbut-2-enyl diphosphate binding site. Residue C188 participates in [4Fe-4S] cluster binding. Positions 216, 218, and 259 each coordinate (2E)-4-hydroxy-3-methylbut-2-enyl diphosphate. S216, N218, and S259 together coordinate dimethylallyl diphosphate. Residues S216, N218, and S259 each contribute to the isopentenyl diphosphate site.

This sequence belongs to the IspH family. It depends on [4Fe-4S] cluster as a cofactor.

It carries out the reaction isopentenyl diphosphate + 2 oxidized [2Fe-2S]-[ferredoxin] + H2O = (2E)-4-hydroxy-3-methylbut-2-enyl diphosphate + 2 reduced [2Fe-2S]-[ferredoxin] + 2 H(+). It catalyses the reaction dimethylallyl diphosphate + 2 oxidized [2Fe-2S]-[ferredoxin] + H2O = (2E)-4-hydroxy-3-methylbut-2-enyl diphosphate + 2 reduced [2Fe-2S]-[ferredoxin] + 2 H(+). It participates in isoprenoid biosynthesis; dimethylallyl diphosphate biosynthesis; dimethylallyl diphosphate from (2E)-4-hydroxy-3-methylbutenyl diphosphate: step 1/1. The protein operates within isoprenoid biosynthesis; isopentenyl diphosphate biosynthesis via DXP pathway; isopentenyl diphosphate from 1-deoxy-D-xylulose 5-phosphate: step 6/6. In terms of biological role, catalyzes the conversion of 1-hydroxy-2-methyl-2-(E)-butenyl 4-diphosphate (HMBPP) into a mixture of isopentenyl diphosphate (IPP) and dimethylallyl diphosphate (DMAPP). Acts in the terminal step of the DOXP/MEP pathway for isoprenoid precursor biosynthesis. The polypeptide is 4-hydroxy-3-methylbut-2-enyl diphosphate reductase (Dictyoglomus thermophilum (strain ATCC 35947 / DSM 3960 / H-6-12)).